The sequence spans 339 residues: Phosphate acyltransferase (339 aa).

It belongs to the PlsX family. Homodimer. Probably interacts with PlsY.

The protein resides in the cytoplasm. The enzyme catalyses a fatty acyl-[ACP] + phosphate = an acyl phosphate + holo-[ACP]. The protein operates within lipid metabolism; phospholipid metabolism. Catalyzes the reversible formation of acyl-phosphate (acyl-PO(4)) from acyl-[acyl-carrier-protein] (acyl-ACP). This enzyme utilizes acyl-ACP as fatty acyl donor, but not acyl-CoA. This chain is Phosphate acyltransferase, found in Ruthia magnifica subsp. Calyptogena magnifica.